The chain runs to 422 residues: Proline--tRNA ligase (422 aa).

It belongs to the class-II aminoacyl-tRNA synthetase family. ProS type 2 subfamily. Homodimer.

Its subcellular location is the cytoplasm. The enzyme catalyses tRNA(Pro) + L-proline + ATP = L-prolyl-tRNA(Pro) + AMP + diphosphate. Catalyzes the attachment of proline to tRNA(Pro) in a two-step reaction: proline is first activated by ATP to form Pro-AMP and then transferred to the acceptor end of tRNA(Pro). The protein is Proline--tRNA ligase of Wolbachia sp. subsp. Drosophila simulans (strain wRi).